We begin with the raw amino-acid sequence, 366 residues long: Septin-1 (366 aa).

The region spanning 22–295 (KGFDFTLMVA…EGYRARCLQS (274 aa)) is the Septin-type G domain. The G1 motif stretch occupies residues 32 to 39 (GESGLGKS). GTP is bound by residues 32–39 (GESGLGKS), Thr66, Gly92, and 171–179 (KADALMPRE). Residues 89-92 (DTPG) are G3 motif. A G4 motif region spans residues 170-173 (GKAD). Ser206 is modified (phosphoserine). Residues Gly229 and Arg244 each contribute to the GTP site. At Ser247 the chain carries Phosphoserine. A Phosphothreonine modification is found at Thr250. A phosphoserine; by AURKB mark is found at Ser306 and Ser314. Positions 347–366 (EKMQAQMQQSQAQGEQSDVL) are disordered. A compositionally biased stretch (low complexity) spans 349–366 (MQAQMQQSQAQGEQSDVL).

Belongs to the TRAFAC class TrmE-Era-EngA-EngB-Septin-like GTPase superfamily. Septin GTPase family. Septins polymerize into heterooligomeric protein complexes that form filaments, and can associate with cellular membranes, actin filaments and microtubules. GTPase activity is required for filament formation. Interacts with AURKB.

Its subcellular location is the cytoplasm. It localises to the cytoskeleton. It is found in the microtubule organizing center. The protein resides in the centrosome. The protein localises to the midbody. In terms of biological role, filament-forming cytoskeletal GTPase. May play a role in cytokinesis (Potential). The chain is Septin-1 from Mus musculus (Mouse).